A 124-amino-acid polypeptide reads, in one-letter code: Small ribosomal subunit protein uS12 (124 aa).

Residues 1 to 28 are disordered; it reads MPTIQQLIRSERSKAKKKTKSPALKQCP. A 3-methylthioaspartic acid modification is found at Asp-89. The interval 101–124 is disordered; it reads TLDAQGVKDRKQGRSKYGTKKPKE. The span at 113–124 shows a compositional bias: basic residues; sequence GRSKYGTKKPKE.

It belongs to the universal ribosomal protein uS12 family. In terms of assembly, part of the 30S ribosomal subunit. Contacts proteins S8 and S17. May interact with IF1 in the 30S initiation complex.

With S4 and S5 plays an important role in translational accuracy. Functionally, interacts with and stabilizes bases of the 16S rRNA that are involved in tRNA selection in the A site and with the mRNA backbone. Located at the interface of the 30S and 50S subunits, it traverses the body of the 30S subunit contacting proteins on the other side and probably holding the rRNA structure together. The combined cluster of proteins S8, S12 and S17 appears to hold together the shoulder and platform of the 30S subunit. The sequence is that of Small ribosomal subunit protein uS12 from Crocosphaera subtropica (strain ATCC 51142 / BH68) (Cyanothece sp. (strain ATCC 51142)).